We begin with the raw amino-acid sequence, 554 residues long: Oxygen-dependent choline dehydrogenase (554 aa).

4 to 33 (DYIIIGAGSAGNVLATRLTEDPNTTVLLLE) serves as a coordination point for FAD. Residue His-473 is the Proton acceptor of the active site.

Belongs to the GMC oxidoreductase family. FAD serves as cofactor.

It catalyses the reaction choline + A = betaine aldehyde + AH2. It carries out the reaction betaine aldehyde + NAD(+) + H2O = glycine betaine + NADH + 2 H(+). It participates in amine and polyamine biosynthesis; betaine biosynthesis via choline pathway; betaine aldehyde from choline (cytochrome c reductase route): step 1/1. Involved in the biosynthesis of the osmoprotectant glycine betaine. Catalyzes the oxidation of choline to betaine aldehyde and betaine aldehyde to glycine betaine at the same rate. The chain is Oxygen-dependent choline dehydrogenase from Klebsiella pneumoniae subsp. pneumoniae (strain ATCC 700721 / MGH 78578).